Consider the following 313-residue polypeptide: UPF0761 membrane protein VV1_0885 (313 aa).

Helical transmembrane passes span 41–61, 104–124, 139–159, 185–205, 215–235, and 249–269; these read YLAY…LSIL, MTAV…SNID, AVFS…LVGA, LLRW…YLLV, AVVG…GFAA, and ALAA…IVLI. Residues 294-313 are disordered; that stretch reads PNNDTELEKDTQRDRFDSES. Over residues 299–313 the composition is skewed to basic and acidic residues; sequence ELEKDTQRDRFDSES.

The protein belongs to the UPF0761 family.

Its subcellular location is the cell inner membrane. The sequence is that of UPF0761 membrane protein VV1_0885 from Vibrio vulnificus (strain CMCP6).